A 433-amino-acid chain; its full sequence is MSAIVDIVGREILDSRGNPTVECDVLLESGVMGRAAVPSGASTGSREAIELRDGDKGRYLGKGVLKAVEHLNTEVSEAVLGLDASEQAFLDKTLIDLDGTDNKARIGANATLAVSMAVARAAAEESGLPLYRYFGGMGGMQLPVPMMNVVNGGAHANNSLDLQELMIIPVGAPSFREAVRWGAETFHALKKILHDKGISTAVGDEGGFAPSVENHEAAIQMILEAIDKAGYTPGTQIALGLDCAASEFYKPGKNGSLVYQLDGEGGLSLSAQQWTDMLAGWVDKYPIISIEDGMAEGDWAGWAHLTEVLGKKVQLVGDDLFVTNTKILQEGIDKGIANSILIKINQIGTLTETFAAIEMAKRAGYTAVISHRSGETEDSTIADIAVGTNAGQIKTGSLSRSDRMAKYNQLLRIEEDLGDVAVYPGRAAFYNLR.

A (2R)-2-phosphoglycerate-binding site is contributed by Gln163. Glu205 serves as the catalytic Proton donor. Positions 242, 291, and 318 each coordinate Mg(2+). Residues Lys343, Arg372, Ser373, and Lys394 each coordinate (2R)-2-phosphoglycerate. Lys343 functions as the Proton acceptor in the catalytic mechanism.

It belongs to the enolase family. Mg(2+) is required as a cofactor.

The protein localises to the cytoplasm. It localises to the secreted. The protein resides in the cell surface. The catalysed reaction is (2R)-2-phosphoglycerate = phosphoenolpyruvate + H2O. It functions in the pathway carbohydrate degradation; glycolysis; pyruvate from D-glyceraldehyde 3-phosphate: step 4/5. In terms of biological role, catalyzes the reversible conversion of 2-phosphoglycerate (2-PG) into phosphoenolpyruvate (PEP). It is essential for the degradation of carbohydrates via glycolysis. This is Enolase from Methylibium petroleiphilum (strain ATCC BAA-1232 / LMG 22953 / PM1).